The sequence spans 265 residues: uncharacterized protein (265 aa).

Ser-223 bears the Phosphoserine mark.

This is an uncharacterized protein from Saccharomyces cerevisiae (strain ATCC 204508 / S288c) (Baker's yeast).